The chain runs to 185 residues: Putative manganese efflux pump MntP (185 aa).

6 consecutive transmembrane segments (helical) span residues Leu-8–Leu-28, Ile-42–Phe-62, Ile-66–Leu-86, Met-103–Leu-123, Ile-137–Leu-157, and Lys-165–Met-185.

This sequence belongs to the MntP (TC 9.B.29) family.

Its subcellular location is the cell membrane. Probably functions as a manganese efflux pump. This Clostridium novyi (strain NT) protein is Putative manganese efflux pump MntP.